The sequence spans 120 residues: MGVYTFVCRNNGGEWTAKQHSGEIEASAATPYELQRRLVAAASAADSRYGVQSSFSMVTPSSAVFQVIVGAVGGGAMMVSGGGGGGAAASGGAAAEAPKEEKKEEEKEESDDDMGFSLFD.

A disordered region spans residues 83–120 (GGGGAAASGGAAAEAPKEEKKEEEKEESDDDMGFSLFD).

This sequence belongs to the eukaryotic ribosomal protein P1/P2 family. Phosphorylated.

Its function is as follows. Plays an important role in the elongation step of protein synthesis. The chain is Large ribosomal subunit protein P3 (RPP3A) from Zea mays (Maize).